The chain runs to 1116 residues: Protein translocase subunit SecA (1116 aa).

ATP contacts are provided by residues Gln-177, 195–199, and Asp-692; that span reads GEGKT.

Belongs to the SecA family. In terms of assembly, monomer and homodimer. Part of the essential Sec protein translocation apparatus which comprises SecA, SecYEG and auxiliary proteins SecDF. Other proteins may also be involved.

It is found in the cell inner membrane. Its subcellular location is the cytoplasm. The catalysed reaction is ATP + H2O + cellular proteinSide 1 = ADP + phosphate + cellular proteinSide 2.. Part of the Sec protein translocase complex. Interacts with the SecYEG preprotein conducting channel. Has a central role in coupling the hydrolysis of ATP to the transfer of proteins into and across the cell membrane, serving as an ATP-driven molecular motor driving the stepwise translocation of polypeptide chains across the membrane. In Flavobacterium psychrophilum (strain ATCC 49511 / DSM 21280 / CIP 103535 / JIP02/86), this protein is Protein translocase subunit SecA.